The chain runs to 370 residues: Spermidine/putrescine import ATP-binding protein PotA 1 (370 aa).

Residues 12–250 enclose the ABC transporter domain; the sequence is VSIRAVRKVY…PGNRFVADFI (239 aa). ATP is bound at residue 48 to 55; it reads GPSGCGKT.

Belongs to the ABC transporter superfamily. Spermidine/putrescine importer (TC 3.A.1.11.1) family. In terms of assembly, the complex is composed of two ATP-binding proteins (PotA), two transmembrane proteins (PotB and PotC) and a solute-binding protein (PotD).

The protein localises to the cell inner membrane. The enzyme catalyses ATP + H2O + polyamine-[polyamine-binding protein]Side 1 = ADP + phosphate + polyamineSide 2 + [polyamine-binding protein]Side 1.. Part of the ABC transporter complex PotABCD involved in spermidine/putrescine import. Responsible for energy coupling to the transport system. The chain is Spermidine/putrescine import ATP-binding protein PotA 1 from Pseudomonas aeruginosa (strain ATCC 15692 / DSM 22644 / CIP 104116 / JCM 14847 / LMG 12228 / 1C / PRS 101 / PAO1).